Consider the following 291-residue polypeptide: 4-hydroxy-tetrahydrodipicolinate synthase (291 aa).

Threonine 44 contributes to the pyruvate binding site. The active-site Proton donor/acceptor is tyrosine 132. Lysine 160 serves as the catalytic Schiff-base intermediate with substrate. Isoleucine 202 lines the pyruvate pocket.

Belongs to the DapA family. As to quaternary structure, homotetramer; dimer of dimers.

It localises to the cytoplasm. The enzyme catalyses L-aspartate 4-semialdehyde + pyruvate = (2S,4S)-4-hydroxy-2,3,4,5-tetrahydrodipicolinate + H2O + H(+). It participates in amino-acid biosynthesis; L-lysine biosynthesis via DAP pathway; (S)-tetrahydrodipicolinate from L-aspartate: step 3/4. In terms of biological role, catalyzes the condensation of (S)-aspartate-beta-semialdehyde [(S)-ASA] and pyruvate to 4-hydroxy-tetrahydrodipicolinate (HTPA). The chain is 4-hydroxy-tetrahydrodipicolinate synthase from Syntrophus aciditrophicus (strain SB).